The chain runs to 243 residues: Pyridoxine 5'-phosphate synthase (243 aa).

A 3-amino-2-oxopropyl phosphate-binding site is contributed by N9. Residue 11-12 (DH) coordinates 1-deoxy-D-xylulose 5-phosphate. R20 is a binding site for 3-amino-2-oxopropyl phosphate. Catalysis depends on H45, which acts as the Proton acceptor. 1-deoxy-D-xylulose 5-phosphate is bound by residues R47 and H52. Catalysis depends on E72, which acts as the Proton acceptor. Residue T102 participates in 1-deoxy-D-xylulose 5-phosphate binding. H193 functions as the Proton donor in the catalytic mechanism. Residues G194 and 215–216 (GH) contribute to the 3-amino-2-oxopropyl phosphate site.

Belongs to the PNP synthase family. Homooctamer; tetramer of dimers.

The protein localises to the cytoplasm. The catalysed reaction is 3-amino-2-oxopropyl phosphate + 1-deoxy-D-xylulose 5-phosphate = pyridoxine 5'-phosphate + phosphate + 2 H2O + H(+). It functions in the pathway cofactor biosynthesis; pyridoxine 5'-phosphate biosynthesis; pyridoxine 5'-phosphate from D-erythrose 4-phosphate: step 5/5. In terms of biological role, catalyzes the complicated ring closure reaction between the two acyclic compounds 1-deoxy-D-xylulose-5-phosphate (DXP) and 3-amino-2-oxopropyl phosphate (1-amino-acetone-3-phosphate or AAP) to form pyridoxine 5'-phosphate (PNP) and inorganic phosphate. This is Pyridoxine 5'-phosphate synthase from Aliivibrio fischeri (strain ATCC 700601 / ES114) (Vibrio fischeri).